The sequence spans 206 residues: Large ribosomal subunit protein uL4 (206 aa).

The disordered stretch occupies residues 46–77 (GTRAQKDREQVRHSTKKPFKQKGTGNARAGMT).

Belongs to the universal ribosomal protein uL4 family. As to quaternary structure, part of the 50S ribosomal subunit.

In terms of biological role, one of the primary rRNA binding proteins, this protein initially binds near the 5'-end of the 23S rRNA. It is important during the early stages of 50S assembly. It makes multiple contacts with different domains of the 23S rRNA in the assembled 50S subunit and ribosome. Its function is as follows. Forms part of the polypeptide exit tunnel. The polypeptide is Large ribosomal subunit protein uL4 (Paracidovorax citrulli (strain AAC00-1) (Acidovorax citrulli)).